The primary structure comprises 417 residues: Aminoacyltransferase FemB (417 aa).

This sequence belongs to the FemABX family.

It is found in the cytoplasm. The catalysed reaction is MurNAc-L-Ala-D-isoglutaminyl-L-Lys-(N(6)-tri-Gly)-D-Ala-D-Ala-diphospho-di-trans,octa-cis-undecaprenyl-GlcNAc + 2 glycyl-tRNA(Gly) = MurNAc-L-Ala-D-isoglutaminyl-L-Lys-(N(6)-penta-Gly)-D-Ala-D-Ala-diphospho-di-trans,octa-cis-undecaprenyl-GlcNAc + 2 tRNA(Gly) + 2 H(+). Its function is as follows. Catalyzes the incorporation of amino acid(s) into the interchain peptide bridge of peptidoglycan, using aminoacyl-tRNA as amino acid donor. The sequence is that of Aminoacyltransferase FemB (femB) from Staphylococcus epidermidis.